The primary structure comprises 154 residues: Putative thioredoxin H10 (154 aa).

Positions 24 to 148 (NNNNSYGQTR…LQKKTAAAAD (125 aa)) constitute a Thioredoxin domain. Active-site nucleophile residues include C74 and C77. C74 and C77 are oxidised to a cystine.

Belongs to the thioredoxin family.

Its subcellular location is the cytoplasm. Probable thiol-disulfide oxidoreductase that may be involved in the redox regulation of a number of cytosolic enzymes. This chain is Putative thioredoxin H10, found in Arabidopsis thaliana (Mouse-ear cress).